Consider the following 360-residue polypeptide: NAD(P)H-quinone oxidoreductase subunit 1, chloroplastic (360 aa).

Transmembrane regions (helical) follow at residues 30–50 (FLPI…LVWL), 98–118 (FSIG…VIPF), 127–147 (FNIG…GLLM), 165–185 (AAQS…ISLL), 203–223 (FWGW…ISSL), 253–273 (FGLF…FVTV), 297–317 (IFGT…FLFI), and 340–360 (FLLP…VFSL).

It belongs to the complex I subunit 1 family. As to quaternary structure, NDH is composed of at least 16 different subunits, 5 of which are encoded in the nucleus.

The protein localises to the plastid. The protein resides in the chloroplast thylakoid membrane. It catalyses the reaction a plastoquinone + NADH + (n+1) H(+)(in) = a plastoquinol + NAD(+) + n H(+)(out). The catalysed reaction is a plastoquinone + NADPH + (n+1) H(+)(in) = a plastoquinol + NADP(+) + n H(+)(out). In terms of biological role, NDH shuttles electrons from NAD(P)H:plastoquinone, via FMN and iron-sulfur (Fe-S) centers, to quinones in the photosynthetic chain and possibly in a chloroplast respiratory chain. The immediate electron acceptor for the enzyme in this species is believed to be plastoquinone. Couples the redox reaction to proton translocation, and thus conserves the redox energy in a proton gradient. The sequence is that of NAD(P)H-quinone oxidoreductase subunit 1, chloroplastic from Aethionema cordifolium (Lebanon stonecress).